Consider the following 467-residue polypeptide: Siroheme synthase (467 aa).

The tract at residues methionine 1 to methionine 203 is precorrin-2 dehydrogenase /sirohydrochlorin ferrochelatase. Residues glutamate 22–isoleucine 23 and proline 43–glutamate 44 contribute to the NAD(+) site. Serine 128 carries the post-translational modification Phosphoserine. The tract at residues glycine 216–glycine 467 is uroporphyrinogen-III C-methyltransferase. Residue proline 225 participates in S-adenosyl-L-methionine binding. Residue aspartate 248 is the Proton acceptor of the active site. Catalysis depends on lysine 270, which acts as the Proton donor. S-adenosyl-L-methionine-binding positions include glycine 301–aspartate 303, isoleucine 306, threonine 331–alanine 332, methionine 383, and glycine 412.

This sequence in the N-terminal section; belongs to the precorrin-2 dehydrogenase / sirohydrochlorin ferrochelatase family. It in the C-terminal section; belongs to the precorrin methyltransferase family.

The catalysed reaction is uroporphyrinogen III + 2 S-adenosyl-L-methionine = precorrin-2 + 2 S-adenosyl-L-homocysteine + H(+). It catalyses the reaction precorrin-2 + NAD(+) = sirohydrochlorin + NADH + 2 H(+). The enzyme catalyses siroheme + 2 H(+) = sirohydrochlorin + Fe(2+). The protein operates within cofactor biosynthesis; adenosylcobalamin biosynthesis; precorrin-2 from uroporphyrinogen III: step 1/1. Its pathway is cofactor biosynthesis; adenosylcobalamin biosynthesis; sirohydrochlorin from precorrin-2: step 1/1. It functions in the pathway porphyrin-containing compound metabolism; siroheme biosynthesis; precorrin-2 from uroporphyrinogen III: step 1/1. It participates in porphyrin-containing compound metabolism; siroheme biosynthesis; siroheme from sirohydrochlorin: step 1/1. The protein operates within porphyrin-containing compound metabolism; siroheme biosynthesis; sirohydrochlorin from precorrin-2: step 1/1. Its function is as follows. Multifunctional enzyme that catalyzes the SAM-dependent methylations of uroporphyrinogen III at position C-2 and C-7 to form precorrin-2 via precorrin-1. Then it catalyzes the NAD-dependent ring dehydrogenation of precorrin-2 to yield sirohydrochlorin. Finally, it catalyzes the ferrochelation of sirohydrochlorin to yield siroheme. The sequence is that of Siroheme synthase from Methylobacillus flagellatus (strain ATCC 51484 / DSM 6875 / VKM B-1610 / KT).